We begin with the raw amino-acid sequence, 354 residues long: Ferrochelatase (354 aa).

His214 and Glu295 together coordinate Fe cation.

It belongs to the ferrochelatase family.

The protein resides in the cytoplasm. The enzyme catalyses heme b + 2 H(+) = protoporphyrin IX + Fe(2+). It participates in porphyrin-containing compound metabolism; protoheme biosynthesis; protoheme from protoporphyrin-IX: step 1/1. Catalyzes the ferrous insertion into protoporphyrin IX. In Burkholderia cenocepacia (strain HI2424), this protein is Ferrochelatase.